Consider the following 296-residue polypeptide: NADPH-dependent 1-acyldihydroxyacetone phosphate reductase (296 aa).

Ile9 contributes to the NADP(+) binding site. The GXSXG signature appears at 11–15 (GCSEG). Residues Thr35, Arg41, Asp56, Asn84, Lys117, Tyr148, Lys152, Val181, and Thr183 each contribute to the NADP(+) site. Catalysis depends on Tyr148, which acts as the Proton donor. Lys152 (lowers pKa of active site Tyr) is an active-site residue.

This sequence belongs to the short-chain dehydrogenases/reductases (SDR) family.

It is found in the lipid droplet. Its subcellular location is the cytoplasm. The protein localises to the vacuole. It localises to the endoplasmic reticulum. The protein resides in the golgi apparatus. It is found in the mitochondrion outer membrane. The catalysed reaction is 1-hexadecanoyl-sn-glycero-3-phosphate + NADP(+) = 1-hexadecanoylglycerone 3-phosphate + NADPH + H(+). The enzyme catalyses a 1-acylglycerone 3-phosphate + NADPH + H(+) = a 1-acyl-sn-glycero-3-phosphate + NADP(+). It carries out the reaction a triacylglycerol + H2O = a diacylglycerol + a fatty acid + H(+). Can convert acyl and alkyl dihydroxyacetone-phosphate (DHAP) into glycerolipids and ether lipids, respectively. Required for the biosynthesis of phosphatidic acid via the DHAP pathway, where it reduces 1-acyl DHAP to lysophosphatidic acid (LPA). Also has triacylglycerol (TAG) lipase activity. Involved in the mobilization of the non-polar storage lipids triacylglycerols (TAGs) from lipid particles by hydrolysis of TAGs. Lipolysis of TAG by AYR1 is essential for starvation-induced autophagy. Forms an NADPH-regulated cation-selective channel in the mitochondrial outer membrane. This chain is NADPH-dependent 1-acyldihydroxyacetone phosphate reductase (ayr1), found in Schizosaccharomyces pombe (strain 972 / ATCC 24843) (Fission yeast).